A 277-amino-acid polypeptide reads, in one-letter code: F420-dependent methylenetetrahydromethanopterin dehydrogenase (277 aa).

Belongs to the MTD family.

It carries out the reaction 5,10-methylenetetrahydromethanopterin + oxidized coenzyme F420-(gamma-L-Glu)(n) + 2 H(+) = 5,10-methenyl-5,6,7,8-tetrahydromethanopterin + reduced coenzyme F420-(gamma-L-Glu)(n). Its pathway is one-carbon metabolism; methanogenesis from CO(2); 5,10-methylene-5,6,7,8-tetrahydromethanopterin from 5,10-methenyl-5,6,7,8-tetrahydromethanopterin (coenzyme F420 route): step 1/1. Its function is as follows. Catalyzes the reversible reduction of methenyl-H(4)MPT(+) to methylene-H(4)MPT. The chain is F420-dependent methylenetetrahydromethanopterin dehydrogenase from Methanococcus maripaludis (strain C7 / ATCC BAA-1331).